Here is a 177-residue protein sequence, read N- to C-terminus: Endoribonuclease YbeY (177 aa).

3 residues coordinate Zn(2+): histidine 142, histidine 146, and histidine 152.

Belongs to the endoribonuclease YbeY family. Zn(2+) serves as cofactor.

Its subcellular location is the cytoplasm. Its function is as follows. Single strand-specific metallo-endoribonuclease involved in late-stage 70S ribosome quality control and in maturation of the 3' terminus of the 16S rRNA. This Synechococcus sp. (strain CC9311) protein is Endoribonuclease YbeY.